The primary structure comprises 360 residues: Lipid-A-disaccharide synthase (360 aa).

The protein belongs to the LpxB family.

It catalyses the reaction a lipid X + a UDP-2-N,3-O-bis[(3R)-3-hydroxyacyl]-alpha-D-glucosamine = a lipid A disaccharide + UDP + H(+). The protein operates within bacterial outer membrane biogenesis; LPS lipid A biosynthesis. In terms of biological role, condensation of UDP-2,3-diacylglucosamine and 2,3-diacylglucosamine-1-phosphate to form lipid A disaccharide, a precursor of lipid A, a phosphorylated glycolipid that anchors the lipopolysaccharide to the outer membrane of the cell. The chain is Lipid-A-disaccharide synthase from Helicobacter pylori (strain HPAG1).